Consider the following 437-residue polypeptide: GTPase Der (437 aa).

EngA-type G domains are found at residues N3–S167 and P176–M352. GTP-binding positions include G9 to S16, D56 to W60, N119 to D122, G182 to S189, D229 to I233, and N294 to D297. The KH-like domain maps to I353–K437.

Belongs to the TRAFAC class TrmE-Era-EngA-EngB-Septin-like GTPase superfamily. EngA (Der) GTPase family. Associates with the 50S ribosomal subunit.

In terms of biological role, GTPase that plays an essential role in the late steps of ribosome biogenesis. The chain is GTPase Der from Bacteroides fragilis (strain ATCC 25285 / DSM 2151 / CCUG 4856 / JCM 11019 / LMG 10263 / NCTC 9343 / Onslow / VPI 2553 / EN-2).